A 125-amino-acid polypeptide reads, in one-letter code: UPF0231 protein HD_1708 (125 aa).

It belongs to the UPF0231 family.

The sequence is that of UPF0231 protein HD_1708 from Haemophilus ducreyi (strain 35000HP / ATCC 700724).